Reading from the N-terminus, the 211-residue chain is Histidine biosynthesis bifunctional protein HisIE (211 aa).

A phosphoribosyl-AMP cyclohydrolase region spans residues 1 to 107; that stretch reads MNKLIDFSKG…FNSEIESRFK (107 aa). The tract at residues 108–211 is phosphoribosyl-ATP pyrophosphohydrolase; that stretch reads IQALAQTIHQ…KGERKKVQEW (104 aa).

The protein in the N-terminal section; belongs to the PRA-CH family. It in the C-terminal section; belongs to the PRA-PH family.

Its subcellular location is the cytoplasm. The enzyme catalyses 1-(5-phospho-beta-D-ribosyl)-ATP + H2O = 1-(5-phospho-beta-D-ribosyl)-5'-AMP + diphosphate + H(+). It catalyses the reaction 1-(5-phospho-beta-D-ribosyl)-5'-AMP + H2O = 1-(5-phospho-beta-D-ribosyl)-5-[(5-phospho-beta-D-ribosylamino)methylideneamino]imidazole-4-carboxamide. It participates in amino-acid biosynthesis; L-histidine biosynthesis; L-histidine from 5-phospho-alpha-D-ribose 1-diphosphate: step 2/9. Its pathway is amino-acid biosynthesis; L-histidine biosynthesis; L-histidine from 5-phospho-alpha-D-ribose 1-diphosphate: step 3/9. In Staphylococcus epidermidis (strain ATCC 12228 / FDA PCI 1200), this protein is Histidine biosynthesis bifunctional protein HisIE.